Consider the following 34-residue polypeptide: Corticostatin-2 (34 aa).

3 cysteine pairs are disulfide-bonded: Cys3–Cys32, Cys5–Cys21, and Cys11–Cys31.

This sequence belongs to the alpha-defensin family.

The protein localises to the secreted. In terms of biological role, microbicidal activity and inhibits corticotropin (ACTH) stimulated corticosterone production. This Oryctolagus cuniculus (Rabbit) protein is Corticostatin-2.